A 367-amino-acid chain; its full sequence is MAVANLTSEQAVLNEVARQDRNRRAIRIWLGCVLLALFALVLVGGATRLTESGLSITQWQPIHGVIPPLNAQEWQEEFDLYKRIPQFQLLNKDMTVDEFKGIFWWEWAHRFLARAMGVIFGVPLLFFVLTGRVERKLWLPLGGIFLLGGLQGAIGWWMVSSGLQARTDVSQYRLATHLVTACLIFASCMWFMRALSPHSNEPAPTRYSAKLAGLIAFMSLFQIYLGALVAGLDAGMSYNTWPLMDGAVVPGGLFVQSPGWINFFENPKMVQYVHRLGAYALFAVVAVNMIISLRAAAETTHARRSVVLFVLVLIQAILGITTLLLQVPLHLALTHQAGALIVFGFAIANWRGFYGEYPRQTVIAVRD.

The next 5 membrane-spanning stretches (helical) occupy residues 25–45 (AIRI…LVGG), 111–131 (FLAR…VLTG), 137–157 (LWLP…IGWW), 174–194 (LATH…FMRA), and 211–231 (LAGL…LVAG). Heme is bound at residue H274. 3 consecutive transmembrane segments (helical) span residues 276–296 (LGAY…LRAA), 305–325 (SVVL…TLLL), and 327–347 (VPLH…GFAI). Residue H335 coordinates heme.

It belongs to the COX15/CtaA family. Type 2 subfamily. As to quaternary structure, interacts with CtaB. Requires heme b as cofactor.

It is found in the cell membrane. It catalyses the reaction Fe(II)-heme o + 2 A + H2O = Fe(II)-heme a + 2 AH2. It participates in porphyrin-containing compound metabolism; heme A biosynthesis; heme A from heme O: step 1/1. In terms of biological role, catalyzes the conversion of heme O to heme A by two successive hydroxylations of the methyl group at C8. The first hydroxylation forms heme I, the second hydroxylation results in an unstable dihydroxymethyl group, which spontaneously dehydrates, resulting in the formyl group of heme A. The polypeptide is Heme A synthase (Rhizobium rhizogenes (strain K84 / ATCC BAA-868) (Agrobacterium radiobacter)).